Consider the following 152-residue polypeptide: UPF0266 membrane protein CKO_01158 (152 aa).

Helical transmembrane passes span 6 to 26 (LVLV…QFIM), 45 to 65 (VDSV…VTSH), and 67 to 87 (AQIT…IFWV).

This sequence belongs to the UPF0266 family.

It localises to the cell inner membrane. This chain is UPF0266 membrane protein CKO_01158, found in Citrobacter koseri (strain ATCC BAA-895 / CDC 4225-83 / SGSC4696).